Consider the following 203-residue polypeptide: Outer-membrane lipoprotein carrier protein (203 aa).

The N-terminal stretch at 1–21 (MKKLILIGCLMAGMNINVAWA) is a signal peptide.

This sequence belongs to the LolA family. Monomer.

The protein localises to the periplasm. Functionally, participates in the translocation of lipoproteins from the inner membrane to the outer membrane. Only forms a complex with a lipoprotein if the residue after the N-terminal Cys is not an aspartate (The Asp acts as a targeting signal to indicate that the lipoprotein should stay in the inner membrane). The sequence is that of Outer-membrane lipoprotein carrier protein from Photorhabdus laumondii subsp. laumondii (strain DSM 15139 / CIP 105565 / TT01) (Photorhabdus luminescens subsp. laumondii).